The following is a 445-amino-acid chain: UPF0210 protein Sez_0396 (445 aa).

Belongs to the UPF0210 family. In terms of assembly, homodimer.

In Streptococcus equi subsp. zooepidemicus (strain MGCS10565), this protein is UPF0210 protein Sez_0396.